Consider the following 479-residue polypeptide: Ribulose bisphosphate carboxylase large chain 2 (479 aa).

Substrate-binding residues include asparagine 116 and threonine 166. Lysine 168 serves as the catalytic Proton acceptor. Lysine 170 contributes to the substrate binding site. Residues lysine 194, aspartate 196, and glutamate 197 each coordinate Mg(2+). Lysine 194 carries the N6-carboxylysine modification. The active-site Proton acceptor is histidine 287. Substrate-binding residues include arginine 288, histidine 320, and serine 372.

The protein belongs to the RuBisCO large chain family. Type I subfamily. As to quaternary structure, heterohexadecamer of 8 large chains and 8 small chains. It depends on Mg(2+) as a cofactor.

It carries out the reaction 2 (2R)-3-phosphoglycerate + 2 H(+) = D-ribulose 1,5-bisphosphate + CO2 + H2O. The catalysed reaction is D-ribulose 1,5-bisphosphate + O2 = 2-phosphoglycolate + (2R)-3-phosphoglycerate + 2 H(+). Its function is as follows. RuBisCO catalyzes two reactions: the carboxylation of D-ribulose 1,5-bisphosphate, the primary event in carbon dioxide fixation, as well as the oxidative fragmentation of the pentose substrate. Both reactions occur simultaneously and in competition at the same active site. The sequence is that of Ribulose bisphosphate carboxylase large chain 2 from Bradyrhizobium sp. (strain BTAi1 / ATCC BAA-1182).